The primary structure comprises 368 residues: Chaperone protein DnaJ (368 aa).

Positions Asp5 to Gly69 constitute a J domain. The segment at Gly126–Lys208 adopts a CR-type zinc-finger fold. 8 residues coordinate Zn(2+): Cys139, Cys142, Cys156, Cys159, Cys182, Cys185, Cys196, and Cys199. CXXCXGXG motif repeat units follow at residues Cys139–Gly146, Cys156–Gly163, Cys182–Gly189, and Cys196–Gly203.

This sequence belongs to the DnaJ family. In terms of assembly, homodimer. Zn(2+) serves as cofactor.

The protein localises to the cytoplasm. Its function is as follows. Participates actively in the response to hyperosmotic and heat shock by preventing the aggregation of stress-denatured proteins and by disaggregating proteins, also in an autonomous, DnaK-independent fashion. Unfolded proteins bind initially to DnaJ; upon interaction with the DnaJ-bound protein, DnaK hydrolyzes its bound ATP, resulting in the formation of a stable complex. GrpE releases ADP from DnaK; ATP binding to DnaK triggers the release of the substrate protein, thus completing the reaction cycle. Several rounds of ATP-dependent interactions between DnaJ, DnaK and GrpE are required for fully efficient folding. Also involved, together with DnaK and GrpE, in the DNA replication of plasmids through activation of initiation proteins. The chain is Chaperone protein DnaJ from Exiguobacterium sp. (strain ATCC BAA-1283 / AT1b).